The primary structure comprises 136 residues: uncharacterized protein (136 aa).

The protein belongs to the MG439/MG440 family.

This is an uncharacterized protein from Mycoplasma pneumoniae (strain ATCC 29342 / M129 / Subtype 1) (Mycoplasmoides pneumoniae).